The primary structure comprises 270 residues: Formamidopyrimidine-DNA glycosylase (270 aa).

Catalysis depends on Pro2, which acts as the Schiff-base intermediate with DNA. Glu3 serves as the catalytic Proton donor. The Proton donor; for beta-elimination activity role is filled by Lys58. DNA is bound by residues His91, Arg110, and Arg151. The FPG-type zinc finger occupies 236–270 (FVYGRGGQPCKVCGTELREVKLGQRASVYCPRCQR). Arg260 functions as the Proton donor; for delta-elimination activity in the catalytic mechanism.

This sequence belongs to the FPG family. Monomer. Zn(2+) is required as a cofactor.

The catalysed reaction is Hydrolysis of DNA containing ring-opened 7-methylguanine residues, releasing 2,6-diamino-4-hydroxy-5-(N-methyl)formamidopyrimidine.. It catalyses the reaction 2'-deoxyribonucleotide-(2'-deoxyribose 5'-phosphate)-2'-deoxyribonucleotide-DNA = a 3'-end 2'-deoxyribonucleotide-(2,3-dehydro-2,3-deoxyribose 5'-phosphate)-DNA + a 5'-end 5'-phospho-2'-deoxyribonucleoside-DNA + H(+). Functionally, involved in base excision repair of DNA damaged by oxidation or by mutagenic agents. Acts as a DNA glycosylase that recognizes and removes damaged bases. Has a preference for oxidized purines, such as 7,8-dihydro-8-oxoguanine (8-oxoG). Has AP (apurinic/apyrimidinic) lyase activity and introduces nicks in the DNA strand. Cleaves the DNA backbone by beta-delta elimination to generate a single-strand break at the site of the removed base with both 3'- and 5'-phosphates. The polypeptide is Formamidopyrimidine-DNA glycosylase (Pseudomonas putida (strain ATCC 700007 / DSM 6899 / JCM 31910 / BCRC 17059 / LMG 24140 / F1)).